A 348-amino-acid chain; its full sequence is Oxidase ucsJ (348 aa).

Belongs to the avfA family.

Its pathway is mycotoxin biosynthesis. Oxidase; part of the gene cluster that mediates the biosynthesis of UCS1025A, a member of the pyrrolizidinone family that acts as a strong telomerase inhibitor and displays potent antibacterial and antitumor properties. These compounds share a hemiaminal-containing pyrrolizidinone core fused with a gamma-lactone, giving a furopyrrolizidine that is connected to a decalin fragment. The polyketide synthase module (PKS) of the PKS-NRPS ucsA is responsible for the synthesis of the polyketide backbone via the condensation of an acetyl-CoA starter unit with 6 malonyl-CoA units. The downstream nonribosomal peptide synthetase (NRPS) module then amidates the carboxyl end of the polyketide with a 2S,3S-methylproline derived from L-isoleucine by the 2-oxoglutarate-dependent dioxygenase ucsF which converts L-isoleucine to (4S,5S)-4-methylpyrroline-5-carboxylate that is further converted to 2S,3S-methylproline by the pyrroline-5-carboxylate reductase ucsG. Reductive release of the completed aminoacyl polyketide from the assembly line can form the 3-pyrrolin-2-one structure via an intramolecular Knoevenagel reaction. Because ucsA lacks a designated enoylreductase (ER) domain, the required activity is provided the enoyl reductase ucsL. This keto acyclic precursor is the substrate of the Diels-Alderase ucsH, that catalyzes the Diels-Alder cycloaddition. Oxidation of the 3S-methyl group to a carboxylate by the cytochrome P450 monooxygenase ucsK allows an oxa-Michael cyclization that might involve the reductase/dehydrogenase ucsI and which furnishes the furopyrrolizidine. The oxidase ucsJ likely plays a critical role in stereoselective reduction of the C5-C6 double bond to afford the required R-configured carboxylate group. Further enolization and oxidation at C5 by an unidentified enzyme affords the last intermediate that can undergo oxa-Michael cyclization to yield UCS1025A. The sequence is that of Oxidase ucsJ from Acremonium sp.